The following is a 207-amino-acid chain: Outer-membrane lipoprotein carrier protein (207 aa).

A signal peptide spans 1–23 (MMKPHNLFQFLAVCSLTVAVASA).

Belongs to the LolA family. Monomer.

The protein resides in the periplasm. In terms of biological role, participates in the translocation of lipoproteins from the inner membrane to the outer membrane. Only forms a complex with a lipoprotein if the residue after the N-terminal Cys is not an aspartate (The Asp acts as a targeting signal to indicate that the lipoprotein should stay in the inner membrane). The polypeptide is Outer-membrane lipoprotein carrier protein (Neisseria gonorrhoeae (strain ATCC 700825 / FA 1090)).